The chain runs to 365 residues: Aminomethyltransferase (365 aa).

The protein belongs to the GcvT family. The glycine cleavage system is composed of four proteins: P, T, L and H.

The catalysed reaction is N(6)-[(R)-S(8)-aminomethyldihydrolipoyl]-L-lysyl-[protein] + (6S)-5,6,7,8-tetrahydrofolate = N(6)-[(R)-dihydrolipoyl]-L-lysyl-[protein] + (6R)-5,10-methylene-5,6,7,8-tetrahydrofolate + NH4(+). In terms of biological role, the glycine cleavage system catalyzes the degradation of glycine. In Chlorobaculum tepidum (strain ATCC 49652 / DSM 12025 / NBRC 103806 / TLS) (Chlorobium tepidum), this protein is Aminomethyltransferase.